Here is a 94-residue protein sequence, read N- to C-terminus: Small ribosomal subunit protein uS19 (94 aa).

The protein belongs to the universal ribosomal protein uS19 family.

Its function is as follows. Protein S19 forms a complex with S13 that binds strongly to the 16S ribosomal RNA. The protein is Small ribosomal subunit protein uS19 of Halothermothrix orenii (strain H 168 / OCM 544 / DSM 9562).